The sequence spans 100 residues: MHLSPQEKDKLLIVTAALLAERRLKRGLRLNHPEAVAWLSFLVIEGARDGQSVAELMAEGSTWLRRDQVMDGVPELIPEVQIEAVFTDGTKLVTLHDPIR.

The protein belongs to the urease gamma subunit family. As to quaternary structure, heterotrimer of UreA (gamma), UreB (beta) and UreC (alpha) subunits. Three heterotrimers associate to form the active enzyme.

The protein localises to the cytoplasm. The catalysed reaction is urea + 2 H2O + H(+) = hydrogencarbonate + 2 NH4(+). The protein operates within nitrogen metabolism; urea degradation; CO(2) and NH(3) from urea (urease route): step 1/1. This is Urease subunit gamma from Prochlorococcus marinus (strain MIT 9303).